We begin with the raw amino-acid sequence, 962 residues long: Leucine--tRNA ligase (962 aa).

Residues Pro-40–His-51 carry the 'HIGH' region motif. Positions Ser-548 to Ser-570 are disordered. A 'KMSKS' region motif is present at residues Lys-737–Ser-741. Lys-740 serves as a coordination point for ATP.

This sequence belongs to the class-I aminoacyl-tRNA synthetase family.

It localises to the cytoplasm. It carries out the reaction tRNA(Leu) + L-leucine + ATP = L-leucyl-tRNA(Leu) + AMP + diphosphate. This is Leucine--tRNA ligase from Christiangramia forsetii (strain DSM 17595 / CGMCC 1.15422 / KT0803) (Gramella forsetii).